The following is a 194-amino-acid chain: Fe/S biogenesis protein NfuA (194 aa).

Cys-152 and Cys-155 together coordinate [4Fe-4S] cluster.

The protein belongs to the NfuA family. In terms of assembly, homodimer. [4Fe-4S] cluster serves as cofactor.

Involved in iron-sulfur cluster biogenesis. Binds a 4Fe-4S cluster, can transfer this cluster to apoproteins, and thereby intervenes in the maturation of Fe/S proteins. Could also act as a scaffold/chaperone for damaged Fe/S proteins. The sequence is that of Fe/S biogenesis protein NfuA from Pseudomonas fluorescens (strain Pf0-1).